Reading from the N-terminus, the 359-residue chain is MDLMSFKEKEISKKECLELFEDTENFFDVIKLADSLRKDIVGDTVTYVVNANINFTNICSGTCGFCAFKAEPDDSNAFFLNPNEVAKKALEAKKTGATEVCIQGGLLKEIDTHFQAEILKKVKEITESFGKIDVHAFSPMEVKSAAENAGLSVKEALKILKENGLNSMPGTAAEILNDKIRSEICPTKLKTSEWIDVVTNAHKTGIKTTCTMMYGHIEENKHLAEHLSILRKIQKETGGFTEFVPLTFLHENAPLYHLDRVKNGASGMLDLKTYAVSRIFFKDCIKNIQTSWVKLGTKLSQVSLNCGANDIGGTLMEESISKAAGGSYGTYMSEEKLKDMILAVGRTPKQRNTAYEIIE.

A Radical SAM core domain is found at 45–282 (VTYVVNANIN…TYAVSRIFFK (238 aa)). 3 residues coordinate [4Fe-4S] cluster: Cys-59, Cys-63, and Cys-66.

This sequence belongs to the radical SAM superfamily. CofH family. As to quaternary structure, consists of two subunits, CofG and CofH. [4Fe-4S] cluster serves as cofactor.

It catalyses the reaction 5-amino-6-(D-ribitylamino)uracil + L-tyrosine + S-adenosyl-L-methionine = 5-amino-5-(4-hydroxybenzyl)-6-(D-ribitylimino)-5,6-dihydrouracil + 2-iminoacetate + 5'-deoxyadenosine + L-methionine + H(+). The protein operates within cofactor biosynthesis; coenzyme F0 biosynthesis. Its function is as follows. Catalyzes the radical-mediated synthesis of 5-amino-5-(4-hydroxybenzyl)-6-(D-ribitylimino)-5,6-dihydrouracil from 5-amino-6-(D-ribitylamino)uracil and L-tyrosine. The protein is 5-amino-6-(D-ribitylamino)uracil--L-tyrosine 4-hydroxyphenyl transferase of Methanococcus maripaludis (strain C6 / ATCC BAA-1332).